Here is a 138-residue protein sequence, read N- to C-terminus: NADH-quinone oxidoreductase subunit A (138 aa).

The next 3 helical transmembrane spans lie at 8–28 (FGAV…GYLT), 63–83 (FYVV…LFPW), and 93–113 (FALI…AYAW).

The protein belongs to the complex I subunit 3 family. As to quaternary structure, NDH-1 is composed of 14 different subunits. Subunits NuoA, H, J, K, L, M, N constitute the membrane sector of the complex.

It is found in the cell inner membrane. It catalyses the reaction a quinone + NADH + 5 H(+)(in) = a quinol + NAD(+) + 4 H(+)(out). NDH-1 shuttles electrons from NADH, via FMN and iron-sulfur (Fe-S) centers, to quinones in the respiratory chain. The immediate electron acceptor for the enzyme in this species is believed to be a menaquinone. Couples the redox reaction to proton translocation (for every two electrons transferred, four hydrogen ions are translocated across the cytoplasmic membrane), and thus conserves the redox energy in a proton gradient. The sequence is that of NADH-quinone oxidoreductase subunit A from Prosthecochloris aestuarii (strain DSM 271 / SK 413).